We begin with the raw amino-acid sequence, 1487 residues long: Major viral transcription factor (1487 aa).

3 disordered regions span residues 41-295, 310-370, and 803-1007; these read AAPD…LPPG, LAKT…AEEA, and PPTR…HTPR. The span at 66-75 shows a compositional bias: pro residues; sequence VIPPPSPTPE. Low complexity-rich tracts occupy residues 165 to 193 and 201 to 213; these read PSSA…SSSS and DGAG…SSSS. A compositionally biased stretch (acidic residues) spans 214–224; it reads DDSDSDEGGEE. Residues 235-272 are compositionally biased toward low complexity; sequence AAKTPSAAGSPGPSSGGDRPAAGAATPKSCRSGAASPG. Pro residues predominate over residues 273 to 285; it reads APAPAPASAPAPS. Composition is skewed to low complexity over residues 807–829, 849–860, and 867–877; these read SQQP…AEGS, PSSHSQSPQHSQ, and ATTATCCRATQ. Polar residues predominate over residues 878–893; sequence TNARSRGQQHQPQKAR. A compositionally biased stretch (basic residues) spans 920–929; it reads HGRPRGKSGK. Residues 938–951 show a composition bias toward low complexity; that stretch reads AAQAGASASFSSSA. The segment covering 988–1007 has biased composition (basic and acidic residues); that stretch reads GPDRRGGFRRVPRGDCHTPR.

It belongs to the herpesviridae ICP4 family. In terms of processing, a long stretch of serine residues may be a major site of phosphorylation.

It localises to the host nucleus. Its function is as follows. This IE protein is a multifunctional protein capable of migrating to the nucleus, binding to DNA, trans-activating other viral genes, and autoregulating its own synthesis. This Equine herpesvirus 1 (strain Ab4p) (EHV-1) protein is Major viral transcription factor (IE).